A 144-amino-acid chain; its full sequence is Mediator of RNA polymerase II transcription subunit 21 (144 aa).

This sequence belongs to the Mediator complex subunit 21 family. In terms of assembly, interacts with PPARG. Component of the Mediator complex, which is composed of MED1, MED4, MED6, MED7, MED8, MED9, MED10, MED11, MED12, MED13, MED13L, MED14, MED15, MED16, MED17, MED18, MED19, MED20, MED21, MED22, MED23, MED24, MED25, MED26, MED27, MED29, MED30, MED31, CCNC, CDK8 and CDC2L6/CDK11. The MED12, MED13, CCNC and CDK8 subunits form a distinct module termed the CDK8 module. Mediator containing the CDK8 module is less active than Mediator lacking this module in supporting transcriptional activation. Individual preparations of the Mediator complex lacking one or more distinct subunits have been variously termed ARC, CRSP, DRIP, PC2, SMCC and TRAP. Interacts with THRA in a ligand-dependent fashion.

The protein resides in the nucleus. Component of the Mediator complex, a coactivator involved in the regulated transcription of nearly all RNA polymerase II-dependent genes. Mediator functions as a bridge to convey information from gene-specific regulatory proteins to the basal RNA polymerase II transcription machinery. Mediator is recruited to promoters by direct interactions with regulatory proteins and serves as a scaffold for the assembly of a functional preinitiation complex with RNA polymerase II and the general transcription factors. This is Mediator of RNA polymerase II transcription subunit 21 (MED21) from Homo sapiens (Human).